Reading from the N-terminus, the 89-residue chain is Ragulator complex protein LAMTOR5 homolog (89 aa).

This sequence belongs to the LAMTOR5 family. In terms of assembly, part of the Ragulator complex.

It localises to the cytoplasm. The protein resides in the lysosome. In terms of biological role, regulator of the TOR pathway, a signaling cascade that promotes cell growth in response to growth factors, energy levels, and amino acids. As part of the Ragulator complex, may activate the TOR signaling cascade in response to amino acids. The protein is Ragulator complex protein LAMTOR5 homolog of Dictyostelium discoideum (Social amoeba).